The chain runs to 389 residues: Probable nitrate transporter NarT (389 aa).

12 helical membrane passes run 14 to 34, 45 to 65, 69 to 89, 97 to 117, 139 to 159, 161 to 181, 211 to 231, 246 to 266, 268 to 288, 294 to 314, 331 to 351, and 353 to 373; these read TLSLVVGFMAWSIIAPLMPFI, ISIILAIPVILGSVLRVPFGY, IVGAKWVFFTSFIVLLFPIFF, GMLMASGFFLGVGGAIFSVGV, GNIGTAVSSFLAPPIAGIIGW, TTVRSYLIIIALFALIMFIFG, WYFITFGAFVAFGIFLPNYLV, GVFIALATFLRPIGGILGDKF, AVKVLMIDFVIMIIGAVILGI, LFTVGCLTISICAGIGNGLIF, IVSMMGGLGGFFPPLVITYVA, and LTGSSHLAFIFLAVFGCIALF.

This sequence belongs to the major facilitator superfamily. Nitrate/nitrite porter (TC 2.A.1.8) family.

The protein localises to the cell membrane. Probably required for nitrate uptake under anoxic conditions. Also possibly involved in excretion of nitrite produced by the dissimilatory reduction of nitrate. The sequence is that of Probable nitrate transporter NarT (narT) from Staphylococcus aureus (strain MRSA252).